The sequence spans 136 residues: Large ribosomal subunit protein bL17 (136 aa).

The protein belongs to the bacterial ribosomal protein bL17 family. As to quaternary structure, part of the 50S ribosomal subunit. Contacts protein L32.

The chain is Large ribosomal subunit protein bL17 from Rickettsia canadensis (strain McKiel).